The primary structure comprises 216 residues: Pyrophosphatase PpaX (216 aa).

The active-site Nucleophile is the D9.

The protein belongs to the HAD-like hydrolase superfamily. PpaX family. Mg(2+) serves as cofactor.

It catalyses the reaction diphosphate + H2O = 2 phosphate + H(+). Functionally, hydrolyzes pyrophosphate formed during P-Ser-HPr dephosphorylation by HPrK/P. Might play a role in controlling the intracellular pyrophosphate pool. The protein is Pyrophosphatase PpaX of Bacillus thuringiensis (strain Al Hakam).